Consider the following 320-residue polypeptide: Acetyl-coenzyme A carboxylase carboxyl transferase subunit alpha (320 aa).

The CoA carboxyltransferase C-terminal domain maps to 41–295 (RIEEKAGQAL…GDAIAQAFDE (255 aa)).

This sequence belongs to the AccA family. In terms of assembly, acetyl-CoA carboxylase is a heterohexamer composed of biotin carboxyl carrier protein (AccB), biotin carboxylase (AccC) and two subunits each of ACCase subunit alpha (AccA) and ACCase subunit beta (AccD).

It localises to the cytoplasm. It catalyses the reaction N(6)-carboxybiotinyl-L-lysyl-[protein] + acetyl-CoA = N(6)-biotinyl-L-lysyl-[protein] + malonyl-CoA. It participates in lipid metabolism; malonyl-CoA biosynthesis; malonyl-CoA from acetyl-CoA: step 1/1. In terms of biological role, component of the acetyl coenzyme A carboxylase (ACC) complex. First, biotin carboxylase catalyzes the carboxylation of biotin on its carrier protein (BCCP) and then the CO(2) group is transferred by the carboxyltransferase to acetyl-CoA to form malonyl-CoA. In Bradyrhizobium sp. (strain ORS 278), this protein is Acetyl-coenzyme A carboxylase carboxyl transferase subunit alpha.